The sequence spans 104 residues: UPF0145 protein GTNG_1265 (104 aa).

Belongs to the UPF0145 family.

The sequence is that of UPF0145 protein GTNG_1265 from Geobacillus thermodenitrificans (strain NG80-2).